The sequence spans 419 residues: Dimethylallyltryptophan synthase 1 (419 aa).

3 residues coordinate L-tryptophan: F81, M82, and E90. F81 contributes to the L-tyrosine binding site. Residues R105, K187, Y189, R251, K253, and Y255 each contribute to the (2E)-geranyl diphosphate site. Dimethylallyl diphosphate-binding residues include R105, K187, Y189, R251, K253, and Y255. Position 257 (R257) interacts with L-tryptophan. Residue R257 participates in L-tyrosine binding. Residues K332 and Y334 each coordinate (2E)-geranyl diphosphate. Dimethylallyl diphosphate is bound by residues K332 and Y334. Y389 contributes to the L-tryptophan binding site. Y389 is a binding site for L-tyrosine. A (2E)-geranyl diphosphate-binding site is contributed by Y404.

This sequence belongs to the tryptophan dimethylallyltransferase family.

It catalyses the reaction L-tyrosine + dimethylallyl diphosphate = 4-O-dimethylallyl-L-tyrosine + diphosphate. In terms of biological role, dimethylallyltryptophan synthase; part of the DMATS1 gene cluster that mediates the biosynthesis of a reversely N-prenylated monomeric L-tryptophan (r-N-DMAT). DMATS1 catalyzes the reverse N-prenylation of L-Trp with DMAPP to yield N-dimethylallyl-L-tryptophan. DMATS1 exhibits unusually broad substrate specificity and can utilize geranyl diphosphate (GPP) or L-Tyr as an alternative prenyl donor or acceptor, respectively. Is able to catalyze both forward and reverse prenylation, i.e., at C1 or C3 of DMAPP; and it can catalyze C-N and C-O bond-forming reactions. The main product of the cluster is the reverse-N-dimethylallyl-L-tryptophan (r-N-DMAT) produced by the dimethylallyltryptophan synthase DMATS1 and it remains unclear whether this metabolite undergoes further modifications when silent gene clusters are activated. The acetylated form of r-N-DMAT, ac-r-N-DMAT, is also produced. The roles of the cytochrome P450 monooxygenase FFUJ_09176 and the methyltransferase FFUJ_09178 have still to be elucidated. The sequence is that of Dimethylallyltryptophan synthase 1 from Gibberella fujikuroi (strain CBS 195.34 / IMI 58289 / NRRL A-6831) (Bakanae and foot rot disease fungus).